The primary structure comprises 360 residues: Glutamate 5-kinase (360 aa).

Lys7 provides a ligand contact to ATP. The substrate site is built by Ser47, Asp134, and Asn146. ATP contacts are provided by residues 166 to 167 and 210 to 216; these read TD and TGGISTK. Positions 275–356 constitute a PUA domain; the sequence is VGKITLDDGA…SSIIVVHRDV (82 aa).

It belongs to the glutamate 5-kinase family.

Its subcellular location is the cytoplasm. It catalyses the reaction L-glutamate + ATP = L-glutamyl 5-phosphate + ADP. The protein operates within amino-acid biosynthesis; L-proline biosynthesis; L-glutamate 5-semialdehyde from L-glutamate: step 1/2. Its function is as follows. Catalyzes the transfer of a phosphate group to glutamate to form L-glutamate 5-phosphate. In Prochlorococcus marinus (strain MIT 9301), this protein is Glutamate 5-kinase.